A 30-amino-acid chain; its full sequence is Thaumatin-like protein (30 aa).

This sequence belongs to the thaumatin family.

It is found in the secreted. In terms of biological role, has antifungal activity against C.comatus, F.oxysporum and P.ostreatus. The polypeptide is Thaumatin-like protein (Phaseolus vulgaris (Kidney bean)).